A 626-amino-acid chain; its full sequence is Mitogen-activated protein kinase kinase kinase 3 (626 aa).

One can recognise a PB1 domain in the interval 44–123 (DVRIKFEHNG…KSLRILLLSQ (80 aa)). Composition is skewed to polar residues over residues 146-155 (QSAGDINTIY), 165-174 (LSVSSQNPGR), and 219-232 (SAEN…QSLD). Disordered stretches follow at residues 146 to 184 (QSAG…YVPE) and 218 to 262 (SSAE…SDRE). A Phosphoserine modification is found at Ser-147. Ser-166 bears the Phosphoserine; by SGK1 mark. Phosphoserine is present on residues Ser-250 and Ser-312. A Phosphoserine; by SGK1 modification is found at Ser-337. The residue at position 340 (Ser-340) is a Phosphoserine. One can recognise a Protein kinase domain in the interval 362-622 (WRRGKLLGQG…AEELLTHHFA (261 aa)). Residues 368–376 (LGQGAFGRV) and Lys-391 each bind ATP. Asp-489 (proton acceptor) is an active-site residue.

It belongs to the protein kinase superfamily. STE Ser/Thr protein kinase family. MAP kinase kinase kinase subfamily. Binds both upstream activators and downstream substrates in multimolecular complexes. Part of a complex with MAP2K3, RAC1 and CCM2. Interacts with MAP2K5 and SPAG9. The cofactor is Mg(2+). Post-translationally, phosphorylation at Ser-166 and Ser-337 by SGK1 inhibits its activity.

It carries out the reaction L-seryl-[protein] + ATP = O-phospho-L-seryl-[protein] + ADP + H(+). The enzyme catalyses L-threonyl-[protein] + ATP = O-phospho-L-threonyl-[protein] + ADP + H(+). Its activity is regulated as follows. Activated by phosphorylation on Thr-530. Its function is as follows. Component of a protein kinase signal transduction cascade. Mediates activation of the NF-kappa-B, AP1 and DDIT3 transcriptional regulators. The polypeptide is Mitogen-activated protein kinase kinase kinase 3 (MAP3K3) (Homo sapiens (Human)).